Here is a 517-residue protein sequence, read N- to C-terminus: GMP synthase [glutamine-hydrolyzing] (517 aa).

The 191-residue stretch at 9–199 (RILILDFGSQ…VLGVCGCERL (191 aa)) folds into the Glutamine amidotransferase type-1 domain. The Nucleophile role is filled by C86. Catalysis depends on residues H173 and E175. A GMPS ATP-PPase domain is found at 200 to 392 (WTSESIIEDA…LGLPYNMLYR (193 aa)). 227 to 233 (SGGVDSS) provides a ligand contact to ATP.

In terms of assembly, homodimer.

The catalysed reaction is XMP + L-glutamine + ATP + H2O = GMP + L-glutamate + AMP + diphosphate + 2 H(+). Its pathway is purine metabolism; GMP biosynthesis; GMP from XMP (L-Gln route): step 1/1. Its function is as follows. Catalyzes the synthesis of GMP from XMP. This chain is GMP synthase [glutamine-hydrolyzing], found in Vibrio parahaemolyticus serotype O3:K6 (strain RIMD 2210633).